The chain runs to 97 residues: Large ribosomal subunit protein uL23 (97 aa).

This sequence belongs to the universal ribosomal protein uL23 family. As to quaternary structure, part of the 50S ribosomal subunit. Contacts protein L29, and trigger factor when it is bound to the ribosome.

Its function is as follows. One of the early assembly proteins it binds 23S rRNA. One of the proteins that surrounds the polypeptide exit tunnel on the outside of the ribosome. Forms the main docking site for trigger factor binding to the ribosome. This Sulfurihydrogenibium sp. (strain YO3AOP1) protein is Large ribosomal subunit protein uL23.